Consider the following 93-residue polypeptide: MGRSLKKGPFADASLLKKVEAQADSDKKTVIKTWSRRSTIFPSFIGYTFAVYDGRKHVPVYVQEDMVGHKLGEFVPTRTFRGHAADDKKTGRK.

The protein belongs to the universal ribosomal protein uS19 family.

Protein S19 forms a complex with S13 that binds strongly to the 16S ribosomal RNA. The protein is Small ribosomal subunit protein uS19 of Limosilactobacillus fermentum (strain NBRC 3956 / LMG 18251) (Lactobacillus fermentum).